A 505-amino-acid chain; its full sequence is Maturase K (505 aa).

The protein belongs to the intron maturase 2 family. MatK subfamily.

It is found in the plastid. The protein resides in the chloroplast. Its function is as follows. Usually encoded in the trnK tRNA gene intron. Probably assists in splicing its own and other chloroplast group II introns. The polypeptide is Maturase K (Blitum bonus-henricus (Good King Henry)).